A 98-amino-acid chain; its full sequence is Large ribosomal subunit protein uL23 (98 aa).

Belongs to the universal ribosomal protein uL23 family. Part of the 50S ribosomal subunit. Contacts protein L29, and trigger factor when it is bound to the ribosome.

One of the early assembly proteins it binds 23S rRNA. One of the proteins that surrounds the polypeptide exit tunnel on the outside of the ribosome. Forms the main docking site for trigger factor binding to the ribosome. The protein is Large ribosomal subunit protein uL23 of Streptococcus pneumoniae serotype 19F (strain G54).